The following is a 507-amino-acid chain: Maturase K (507 aa).

This sequence belongs to the intron maturase 2 family. MatK subfamily.

The protein localises to the plastid. It localises to the chloroplast. Usually encoded in the trnK tRNA gene intron. Probably assists in splicing its own and other chloroplast group II introns. In Ranunculus acris (Meadow buttercup), this protein is Maturase K.